A 495-amino-acid chain; its full sequence is Glycerol kinase (495 aa).

T13 contributes to the ADP binding site. Positions 13, 14, and 15 each coordinate ATP. A sn-glycerol 3-phosphate-binding site is contributed by T13. R17 provides a ligand contact to ADP. Sn-glycerol 3-phosphate-binding residues include R83, E84, Y135, and D244. Positions 83, 84, 135, 244, and 245 each coordinate glycerol. ADP is bound by residues T266 and G309. 4 residues coordinate ATP: T266, G309, Q313, and G410. The ADP site is built by G410 and N414.

It belongs to the FGGY kinase family.

The catalysed reaction is glycerol + ATP = sn-glycerol 3-phosphate + ADP + H(+). The protein operates within polyol metabolism; glycerol degradation via glycerol kinase pathway; sn-glycerol 3-phosphate from glycerol: step 1/1. Inhibited by fructose 1,6-bisphosphate (FBP). Its function is as follows. Key enzyme in the regulation of glycerol uptake and metabolism. Catalyzes the phosphorylation of glycerol to yield sn-glycerol 3-phosphate. This Shewanella amazonensis (strain ATCC BAA-1098 / SB2B) protein is Glycerol kinase.